We begin with the raw amino-acid sequence, 425 residues long: MSRVNTMHQWKERLRDRARTASFGRFLWRRFLDDRLFQAAASLAYTTVFALVPLAIVVFGVLSAFPAFNEWKDALTDFIFNNFVPGAARSVQNYLNRSLEDLGKFTVAGMVALVASLLITLHSIEQTFNSIWRVAAARPKVTRFLIYWTVLTLGTMLAAASMAMAAYVFALPLFRTTEGQWLAEFAWRLAPMAVEFVCIVLIYRVVPQHAVRLRHALPGALLAVILMEIVKWGFGFYLGNFQTYQRIYGALSALPILLLWIYLSWVSVLLGASLASSMSAFRYQPEAMRLPPGFEIYGLLRLLGRFRQARLHGNGLDEDRILALEPMLTDTLMQELLCELKRIRLLRRDERSNWLLARDLDVVPLAELYESCQLRVPVEDRPLPCRDDPYGQAAAAALEQLRQPLRSVLAQPVGDLYTHLPGDPP.

6 helical membrane-spanning segments follow: residues 48 to 68 (VFAL…FPAF), 105 to 125 (FTVA…HSIE), 154 to 174 (GTML…LPLF), 182 to 202 (LAEF…IVLI), 216 to 236 (ALPG…GFGF), and 250 to 270 (ALSA…SVLL).

Belongs to the UPF0761 family.

The protein resides in the cell inner membrane. In Xanthomonas campestris pv. campestris (strain B100), this protein is UPF0761 membrane protein xcc-b100_3490.